The following is a 506-amino-acid chain: 5'-3' exonuclease PLD4 (506 aa).

A helical transmembrane segment spans residues 31–51 (LQVLGALAVLWLGSVALICLL). A disulfide bridge connects residues Cys-94 and Cys-250. Asn-150 and Asn-171 each carry an N-linked (GlcNAc...) asparagine glycan. Residues 209–236 (TRGVLHSKFWVVDGRHIYMGSANMDWRS) form the PLD phosphodiesterase 1 domain. His-214 acts as the Proton donor in catalysis. Catalysis depends on residues Lys-216 and Asp-221. Asn-249, Asn-281, Asn-403, Asn-417, and Asn-427 each carry an N-linked (GlcNAc...) asparagine glycan. Residues Cys-379 and Cys-502 are joined by a disulfide bond. In terms of domain architecture, PLD phosphodiesterase 2 spans 423 to 449 (FSRVNHSKFMVTEKAAYIGTSNWSEDY). His-428 acts as the Nucleophile in catalysis. Residue Asn-444 is glycosylated (N-linked (GlcNAc...) asparagine).

It belongs to the phospholipase D family. As to quaternary structure, homodimer. Post-translationally, highly N-glycosylated. In terms of tissue distribution, expressed in plasmacytoid dendritic cells and monocytes (at protein level).

It localises to the endoplasmic reticulum membrane. It is found in the golgi apparatus. Its subcellular location is the trans-Golgi network membrane. The protein resides in the nucleus. The protein localises to the early endosome. It localises to the cytoplasmic vesicle. It is found in the phagosome. Its subcellular location is the lysosome. It catalyses the reaction Exonucleolytic cleavage in the 5'- to 3'-direction to yield nucleoside 3'-phosphates.. The enzyme catalyses a 5'-end 5'-dephospho-ribonucleotidyl-ribonucleotide-RNA + H2O = a ribonucleoside 3'-phosphate + a 5'-end dephospho-ribonucleoside-RNA + H(+). The catalysed reaction is a ribonucleoside 3'-phosphate-2'-3'-cyclophospho-GMP + H2O = a ribonucleoside 3'-phosphate + 2',3'-cyclophospho-GMP + H(+). It carries out the reaction a 5'-end 5'-dephospho-2'-deoxyribonucleotidyl-2'-deoxyribonucleotide in single-stranded DNA + H2O = a 5'-end dephospho-2'-deoxyribonucleoside in single-stranded DNA + a 2'-deoxyribonucleoside 3'-phosphate + H(+). It catalyses the reaction a 5'-end 5'-phospho-2'-deoxyribonucleotide in single-stranded DNA + H2O = a 5'-end 5'-dephospho-2'-deoxyribonucleotide in single-stranded DNA + phosphate. The enzyme catalyses a 3-lyso-sn-glycero-1-phospho-(3'-acyl-1'-sn-glycerol) + a 1-acyl-sn-glycerol = a 3-acyl-sn-glycero-1-phospho-(3'-acyl-1'-sn-glycerol) + glycerol. The catalysed reaction is 3-lyso-sn-glycero-1-phospho-(3'-(9Z-octadecenoyl)-1'-sn-glycerol) + 1-(9Z-octadecenoyl)-sn-glycerol = 3-(9Z-octadecenoyl)-sn-glycero-1-phospho-(3'-(9Z-octadecenoyl)-1'-sn-glycerol) + glycerol. Its activity is regulated as follows. The exonuclease activity toward ssDNA substrate is Ca(2+) and Mg(2+)-independent, but it is inhibited by Fe(2+), Cu(2+) and to a lesser extent Zn(2+) ions. 5'-&gt;3' exonuclease that hydrolyzes the phosphodiester bond of single-stranded DNA (ssDNA) and RNA molecules to form nucleoside 3'-monophosphates and 5'-end 5'-hydroxy deoxyribonucleotide/ribonucleotide fragments. Partially redundant with PLD3, can cleave all four nucleotides displaying higher efficiency for ssDNA and RNA fragments initiated with uridine and guanosine residues and lower efficiency for cytidine-initiated substrates. As a result, it does not always degrade polynucleotides to the single nucleotide level, it can stall at specific sites sparing certain fragments from exonucleolytic degradation. Processes self and pathogenic ssDNA and RNA molecules that reach the endolysosomal compartment via phagocytosis or autophagy and may serve as 'danger' signals for recognition by innate immune receptors such as toll-like receptors (TLRs). Degrades mitochondrial CpG-rich ssDNA fragments to prevent TLR9 activation and autoinflammatory response, but it can cleave viral RNA to generate ligands for TLR7 activation and initiate antiviral immune responses. In plasmacytoid dendritic cells, it cooperates with endonuclease RNASET2 to release 2',3'-cyclic guanosine monophosphate (2',3'-cGMP), a potent stimulatory ligand for TLR7. Produces 2',3'-cGMPs and cytidine-rich RNA fragments that occupy TLR7 ligand-binding pockets and trigger a signaling-competent state. Can exert polynucleotide phosphatase activity toward 5'-phosphorylated ssDNA substrates although at a slow rate. Transphosphatidylase that catalyzes the exchange with R to S stereo-inversion of the glycerol moiety between (S,R)-lysophosphatidylglycerol (LPG) and monoacylglycerol (MAG) substrates to yield (S,S)-bis(monoacylglycero)phosphate (BMP). Can synthesize a variety of (S,S)-BMPs representing the main phospholipid constituent of lysosomal intralumenal vesicle (ILV) membranes that bind acid hydrolases for lipid degradation. Regulates the homeostasis and interorganellar communication of the endolysosomal system with an overall impact on cellular removal of dysfunctional organelles via autophagy as well as proper protein and lipid turnover. May play a role in myotube formation in response to ER stress. The polypeptide is 5'-3' exonuclease PLD4 (Homo sapiens (Human)).